Consider the following 907-residue polypeptide: Nuclear receptor coactivator 7 (907 aa).

The segment covering Met1 to Gln12 has biased composition (basic and acidic residues). Residues Met1–Glu29 adopt a coiled-coil conformation. 3 disordered regions span residues Met1–Ser51, Asp63–Lys83, and Tyr99–Pro121. Polar residues predominate over residues Lys25–Ser41. Composition is skewed to basic and acidic residues over residues Ala68–Glu78 and Tyr99–Met116. One can recognise a LysM domain in the interval Ile125 to Val168. 2 disordered regions span residues Leu335 to Glu373 and Asp401 to Gly443. The segment covering Asp401–Ser422 has biased composition (basic and acidic residues). The region spanning Ala746–Glu907 is the TLDc domain.

Belongs to the OXR1 family.

It is found in the nucleus. Enhances the transcriptional activities of several nuclear receptors. This Gallus gallus (Chicken) protein is Nuclear receptor coactivator 7 (NCOA7).